Here is a 431-residue protein sequence, read N- to C-terminus: SPI-1 type 3 secretion system ATPase (431 aa).

Gly-162 to Met-167 is an ATP binding site.

The protein belongs to the ATPase alpha/beta chains family. T3SS ATPase subfamily. The core secretion machinery of the T3SS is composed of approximately 20 different proteins, including cytoplasmic components, a base, an export apparatus and a needle. This subunit is part of the cytosolic complex. Forms homohexamers.

It localises to the cytoplasm. It carries out the reaction ATP + H2O + cellular proteinSide 1 = ADP + phosphate + cellular proteinSide 2.. Its function is as follows. ATPase component of the type III secretion system (T3SS), also called injectisome, which is used to inject bacterial effector proteins into eukaryotic host cells. Acts as a molecular motor to provide the energy that is required for the export of proteins. Required for type III secretion apparatus (T3SA) formation, proper protein secretion, host cell invasion and virulence. May play a critical role in T3SS substrate recognition, disassembly of the effector/chaperone complex and unfolding of the effector in an ATP-dependent manner prior to secretion. In Salmonella typhi, this protein is SPI-1 type 3 secretion system ATPase.